A 514-amino-acid polypeptide reads, in one-letter code: Transcription termination factor Rho (514 aa).

A disordered region spans residues 25–52 (EPSSTPGPARNARRSNRRMRHPDKDVDK). Basic residues predominate over residues 35–45 (NARRSNRRMRH). The region spanning 141–216 (LMYGEGTLEI…LRIEAINHAD (76 aa)) is the Rho RNA-BD domain. Residues 259–264 (GFGQRG), 271–276 (RAGKTM), and Arg302 contribute to the ATP site.

Belongs to the Rho family. Homohexamer. The homohexamer assembles into an open ring structure.

In terms of biological role, facilitates transcription termination by a mechanism that involves Rho binding to the nascent RNA, activation of Rho's RNA-dependent ATPase activity, and release of the mRNA from the DNA template. This is Transcription termination factor Rho from Rhodopirellula baltica (strain DSM 10527 / NCIMB 13988 / SH1).